Here is a 629-residue protein sequence, read N- to C-terminus: tRNA uridine 5-carboxymethylaminomethyl modification enzyme MnmG (629 aa).

Residues 13–18, V125, and S180 contribute to the FAD site; that span reads GGGHAG. 273–287 lines the NAD(+) pocket; that stretch reads GPRYCPSIEDKVMRF. An FAD-binding site is contributed by Q370.

It belongs to the MnmG family. Homodimer. Heterotetramer of two MnmE and two MnmG subunits. It depends on FAD as a cofactor.

It localises to the cytoplasm. NAD-binding protein involved in the addition of a carboxymethylaminomethyl (cmnm) group at the wobble position (U34) of certain tRNAs, forming tRNA-cmnm(5)s(2)U34. This Aliivibrio fischeri (strain ATCC 700601 / ES114) (Vibrio fischeri) protein is tRNA uridine 5-carboxymethylaminomethyl modification enzyme MnmG.